A 119-amino-acid polypeptide reads, in one-letter code: Holo-[acyl-carrier-protein] synthase (119 aa).

Aspartate 7 and glutamate 53 together coordinate Mg(2+).

The protein belongs to the P-Pant transferase superfamily. AcpS family. Mg(2+) serves as cofactor.

It is found in the cytoplasm. The enzyme catalyses apo-[ACP] + CoA = holo-[ACP] + adenosine 3',5'-bisphosphate + H(+). Functionally, transfers the 4'-phosphopantetheine moiety from coenzyme A to a Ser of acyl-carrier-protein. In Dehalococcoides mccartyi (strain ATCC BAA-2266 / KCTC 15142 / 195) (Dehalococcoides ethenogenes (strain 195)), this protein is Holo-[acyl-carrier-protein] synthase.